Consider the following 234-residue polypeptide: tRNA (guanine-N(1)-)-methyltransferase (234 aa).

S-adenosyl-L-methionine-binding positions include Gly-115 and 135 to 140 (VGDYIL).

It belongs to the RNA methyltransferase TrmD family. As to quaternary structure, homodimer.

The protein localises to the cytoplasm. It catalyses the reaction guanosine(37) in tRNA + S-adenosyl-L-methionine = N(1)-methylguanosine(37) in tRNA + S-adenosyl-L-homocysteine + H(+). Functionally, specifically methylates guanosine-37 in various tRNAs. The sequence is that of tRNA (guanine-N(1)-)-methyltransferase from Rickettsia akari (strain Hartford).